A 336-amino-acid chain; its full sequence is Peroxidase 11 (336 aa).

An N-terminal signal peptide occupies residues 1–20; it reads MMRLLFVFFMVHTIFIPCFS. Cystine bridges form between cysteine 39–cysteine 119, cysteine 72–cysteine 77, cysteine 125–cysteine 331, and cysteine 204–cysteine 236. Histidine 70 (proton acceptor) is an active-site residue. Residues aspartate 71, valine 74, glycine 76, aspartate 78, and serine 80 each coordinate Ca(2+). Proline 167 is a binding site for substrate. Histidine 197 is a heme b binding site. Threonine 198 is a binding site for Ca(2+). Asparagine 246 carries N-linked (GlcNAc...) asparagine glycosylation. Positions 251, 254, and 259 each coordinate Ca(2+).

The protein belongs to the peroxidase family. Classical plant (class III) peroxidase subfamily. Heme b is required as a cofactor. Ca(2+) serves as cofactor. As to expression, expressed in roots and stems.

It localises to the secreted. The enzyme catalyses 2 a phenolic donor + H2O2 = 2 a phenolic radical donor + 2 H2O. Its function is as follows. Removal of H(2)O(2), oxidation of toxic reductants, biosynthesis and degradation of lignin, suberization, auxin catabolism, response to environmental stresses such as wounding, pathogen attack and oxidative stress. These functions might be dependent on each isozyme/isoform in each plant tissue. The chain is Peroxidase 11 (PER11) from Arabidopsis thaliana (Mouse-ear cress).